The following is an 890-amino-acid chain: Major vault protein (890 aa).

9 MVP repeats span residues 2 to 56 (SMEE…VPPR), 57 to 111 (HYCM…DITP), 112 to 164 (LQVV…EIIQ), 165 to 217 (ATVI…DVVD), 218 to 272 (AVIL…GVVS), 273 to 323 (VTTL…IQNV), 324 to 379 (YVLS…ERQA), 380 to 457 (IPLD…KTRV), and 458 to 520 (VSYR…LLGP). The interval 425-455 (ELLNKGQDPLADRGEKETSKTPKLSTPRNKT) is disordered. Positions 434-444 (LADRGEKETSK) are enriched in basic and acidic residues. Lys444 participates in a covalent cross-link: Glycyl lysine isopeptide (Lys-Gly) (interchain with G-Cter in SUMO2).

The vault ribonucleoprotein particle is a huge (400 A x 670 A) cage structure of 12.9 MDa. It consists of a dimer of half-vaults, with each half-vault comprising 39 identical major vault protein (MVP) chains, PARP4 and one or more vault RNAs (vRNAs). Interacts with TEP1. Interacts with PTEN and activated MAPK1. The phosphorylated protein interacts with the SH2 domains of PTPN11 and SRC. Interacts with APEX1. May interact with ZNF540. Post-translationally, phosphorylated on Tyr residues after EGF stimulation. Dephosphorylated by PTPN11.

It is found in the cytoplasm. Its subcellular location is the nucleus. Required for normal vault structure. Vaults are multi-subunit structures that may act as scaffolds for proteins involved in signal transduction. Vaults may also play a role in nucleo-cytoplasmic transport. Down-regulates IFNG-mediated STAT1 signaling and subsequent activation of JAK. Down-regulates SRC activity and signaling through MAP kinases. The chain is Major vault protein (MVP) from Bos taurus (Bovine).